Consider the following 139-residue polypeptide: Centromere protein S (139 aa).

A disordered region spans residues 99-139 (ELASSNMEQKEKKKKKSSAAKGRKTEENETPVTESEDSNMA). Positions 110-120 (KKKKKSSAAKG) are enriched in basic residues.

Belongs to the TAF9 family. CENP-S/MHF1 subfamily. Heterodimer with CENPX, sometimes called MHF; this interaction stabilizes both partners. MHF heterodimers can assemble to form tetrameric structures. MHF also coassemble with CENPT-CENPW heterodimers at centromeres to form the tetrameric CENP-T-W-S-X complex. Forms a discrete complex with FANCM and CENPX, called FANCM-MHF; this interaction, probably mediated by direct binding between CENPS and FANCM, leads to synergistic activation of double-stranded DNA binding and strongly stimulates FANCM-mediated DNA remodeling. Recruited by FANCM to the Fanconi anemia (FA) core complex, which consists of CENPS, CENPX, FANCA, FANCB, FANCC, FANCE, FANCF, FANCG, FANCL, FANCM, FAAP24 and FAAP100. The FA core complex associates with Bloom syndrome (BLM) complex, which consists of at least BLM, DNA topoisomerase 3-alpha (TOP3A), RMI1/BLAP75, RPA1/RPA70 and RPA2/RPA32. The super complex between FA and BLM is called BRAFT. Component of the CENPA-CAD complex, composed of CENPI, CENPK, CENPL, CENPO, CENPP, CENPQ, CENPR and CENPS. The CENPA-CAD complex is probably recruited on centromeres by the CENPA-NAC complex, at least composed of CENPA, CENPC, CENPH, CENPM, CENPN, CENPT and CENPU.

It is found in the nucleus. Its subcellular location is the chromosome. The protein localises to the centromere. The protein resides in the kinetochore. DNA-binding component of the Fanconi anemia (FA) core complex. Required for the normal activation of the FA pathway, leading to monoubiquitination of the FANCI-FANCD2 complex in response to DNA damage, cellular resistance to DNA cross-linking drugs, and prevention of chromosomal breakage. In complex with CENPX (MHF heterodimer), crucial cofactor for FANCM in both binding and ATP-dependent remodeling of DNA. Stabilizes FANCM. In complex with CENPX and FANCM (but not other FANC proteins), rapidly recruited to blocked forks and promotes gene conversion at blocked replication forks. In complex with CENPT, CENPW and CENPX (CENP-T-W-S-X heterotetramer), involved in the formation of a functional kinetochore outer plate, which is essential for kinetochore-microtubule attachment and faithful mitotic progression. As a component of MHF and CENP-T-W-S-X complexes, binds DNA and bends it to form a nucleosome-like structure. DNA-binding function is fulfilled in the presence of CENPX, with the following preference for DNA substates: Holliday junction &gt; double-stranded &gt; splay arm &gt; single-stranded. Does not bind DNA on its own. This is Centromere protein S (CENPS) from Gallus gallus (Chicken).